We begin with the raw amino-acid sequence, 190 residues long: dCTP deaminase (190 aa).

113 to 118 (KSTYAR) contacts dCTP. The active-site Proton donor/acceptor is the glutamate 139. Residues glutamine 158, tyrosine 172, lysine 181, and glutamine 182 each coordinate dCTP.

It belongs to the dCTP deaminase family. In terms of assembly, homotrimer.

It carries out the reaction dCTP + H2O + H(+) = dUTP + NH4(+). It participates in pyrimidine metabolism; dUMP biosynthesis; dUMP from dCTP (dUTP route): step 1/2. In terms of biological role, catalyzes the deamination of dCTP to dUTP. The chain is dCTP deaminase from Chlamydia muridarum (strain MoPn / Nigg).